Reading from the N-terminus, the 181-residue chain is MSEAPKKRWYVVQAFSGFEGRVATSLREHIKLHNMEELFGEVMVPTEEVVEIRGGQRRKSERKFFPGYVLVQMVMNDASWHLVRSVPRVMGFIGGTSDRPAPISDKEVDAIMNRLQQVGDKPRPKTLFEPGEMVRVNDGPFADFNGVVEEVDYEKSRLKVSVSIFGRATPVELDFSQVEKA.

Residues 130–161 (PGEMVRVNDGPFADFNGVVEEVDYEKSRLKVS) form the KOW domain.

The protein belongs to the NusG family. In terms of assembly, monomer. Interacts with the transcription termination factor Rho and with RNA polymerase.

Its function is as follows. Participates in transcription elongation, termination and antitermination. In the absence of Rho, increases the rate of transcription elongation by the RNA polymerase (RNAP), probably by partially suppressing pausing. In the presence of Rho, modulates most Rho-dependent termination events by interacting with the RNAP to render the complex more susceptible to the termination activity of Rho. May be required to overcome a kinetic limitation of Rho to function at certain terminators. Also involved in ribosomal RNA transcriptional antitermination. In Salmonella typhi, this protein is Transcription termination/antitermination protein NusG.